A 245-amino-acid polypeptide reads, in one-letter code: 3-dehydroquinate dehydratase (245 aa).

3-dehydroquinate is bound by residues 35 to 37 (EFR) and arginine 70. The active-site Proton donor/acceptor is the histidine 132. Catalysis depends on lysine 158, which acts as the Schiff-base intermediate with substrate. Positions 199, 220, and 224 each coordinate 3-dehydroquinate.

Belongs to the type-I 3-dehydroquinase family. As to quaternary structure, homodimer.

It catalyses the reaction 3-dehydroquinate = 3-dehydroshikimate + H2O. Its pathway is metabolic intermediate biosynthesis; chorismate biosynthesis; chorismate from D-erythrose 4-phosphate and phosphoenolpyruvate: step 3/7. Involved in the third step of the chorismate pathway, which leads to the biosynthesis of aromatic amino acids. Catalyzes the cis-dehydration of 3-dehydroquinate (DHQ) and introduces the first double bond of the aromatic ring to yield 3-dehydroshikimate. The sequence is that of 3-dehydroquinate dehydratase from Haloquadratum walsbyi (strain DSM 16790 / HBSQ001).